The sequence spans 368 residues: tRNA/tmRNA (uracil-C(5))-methyltransferase (368 aa).

S-adenosyl-L-methionine is bound by residues glutamine 190, tyrosine 218, asparagine 223, glutamate 239, and aspartate 301. The active-site Nucleophile is cysteine 326. The active-site Proton acceptor is glutamate 360.

It belongs to the class I-like SAM-binding methyltransferase superfamily. RNA M5U methyltransferase family. TrmA subfamily.

The enzyme catalyses uridine(54) in tRNA + S-adenosyl-L-methionine = 5-methyluridine(54) in tRNA + S-adenosyl-L-homocysteine + H(+). The catalysed reaction is uridine(341) in tmRNA + S-adenosyl-L-methionine = 5-methyluridine(341) in tmRNA + S-adenosyl-L-homocysteine + H(+). Functionally, dual-specificity methyltransferase that catalyzes the formation of 5-methyluridine at position 54 (m5U54) in all tRNAs, and that of position 341 (m5U341) in tmRNA (transfer-mRNA). The chain is tRNA/tmRNA (uracil-C(5))-methyltransferase from Aliivibrio fischeri (strain MJ11) (Vibrio fischeri).